Consider the following 291-residue polypeptide: uncharacterized protein (291 aa).

This sequence to E.cuniculi ECU03_0120.

This is an uncharacterized protein from Encephalitozoon cuniculi (strain GB-M1) (Microsporidian parasite).